Here is an 850-residue protein sequence, read N- to C-terminus: Protein translocase subunit SecA (850 aa).

ATP is bound by residues glutamine 87, 105–109, and aspartate 494; that span reads GEGKT. Residues cysteine 834, cysteine 836, cysteine 845, and cysteine 846 each coordinate Zn(2+).

The protein belongs to the SecA family. In terms of assembly, monomer and homodimer. Part of the essential Sec protein translocation apparatus which comprises SecA, SecYEG and auxiliary proteins SecDF-YajC and YidC. It depends on Zn(2+) as a cofactor.

The protein localises to the cell inner membrane. It localises to the cytoplasm. The catalysed reaction is ATP + H2O + cellular proteinSide 1 = ADP + phosphate + cellular proteinSide 2.. Functionally, part of the Sec protein translocase complex. Interacts with the SecYEG preprotein conducting channel. Has a central role in coupling the hydrolysis of ATP to the transfer of proteins into and across the cell membrane, serving as an ATP-driven molecular motor driving the stepwise translocation of polypeptide chains across the membrane. The polypeptide is Protein translocase subunit SecA (Desulfotalea psychrophila (strain LSv54 / DSM 12343)).